The primary structure comprises 86 residues: Large ribosomal subunit protein bL31m (86 aa).

The transit peptide at 1-18 directs the protein to the mitochondrion; that stretch reads MKCSLRLFEKAGRLSVRS.

The protein belongs to the bacterial ribosomal protein bL31 family. Highly divergent. As to quaternary structure, component of the mitochondrial large ribosomal subunit (mt-LSU). Mature yeast 74S mitochondrial ribosomes consist of a small (37S) and a large (54S) subunit. The 37S small subunit contains a 15S ribosomal RNA (15S mt-rRNA) and at least 32 different proteins. The 54S large subunit contains a 21S rRNA (21S mt-rRNA) and at least 45 different proteins.

The protein localises to the mitochondrion. Functionally, component of the mitochondrial ribosome (mitoribosome), a dedicated translation machinery responsible for the synthesis of mitochondrial genome-encoded proteins, including at least some of the essential transmembrane subunits of the mitochondrial respiratory chain. The mitoribosomes are attached to the mitochondrial inner membrane and translation products are cotranslationally integrated into the membrane. In Schizosaccharomyces pombe (strain 972 / ATCC 24843) (Fission yeast), this protein is Large ribosomal subunit protein bL31m (tam9).